The primary structure comprises 347 residues: Putative phosphoesterase 078R (347 aa).

A divalent metal cation contacts are provided by D52, N87, and H211.

It belongs to the metallophosphoesterase superfamily. IIV-6 244L family.

This Invertebrate iridescent virus 3 (IIV-3) protein is Putative phosphoesterase 078R.